The chain runs to 477 residues: UDP-N-acetylmuramate--L-alanine ligase (477 aa).

ATP is bound at residue 122-128; it reads GTHGKTT.

Belongs to the MurCDEF family.

The protein localises to the cytoplasm. The catalysed reaction is UDP-N-acetyl-alpha-D-muramate + L-alanine + ATP = UDP-N-acetyl-alpha-D-muramoyl-L-alanine + ADP + phosphate + H(+). It participates in cell wall biogenesis; peptidoglycan biosynthesis. In terms of biological role, cell wall formation. In Xylella fastidiosa (strain M23), this protein is UDP-N-acetylmuramate--L-alanine ligase.